The primary structure comprises 848 residues: Translation initiation factor IF-2 (848 aa).

A disordered region spans residues 90–253; that stretch reads RTYIKRAELQ…PKEKRHAFER (164 aa). Residues 105 to 170 are compositionally biased toward low complexity; sequence EAPAPEEPVQ…SAEPAIAPED (66 aa). 2 stretches are compositionally biased toward basic residues: residues 204–215 and 236–248; these read PKKKQAGHRGPR and KPLR…KEKR. The 168-residue stretch at 344-511 folds into the tr-type G domain; the sequence is KRAPVVSVMG…AVLLQAEILE (168 aa). Residues 353–360 form a G1 region; it reads GHVDHGKT. A GTP-binding site is contributed by 353-360; it reads GHVDHGKT. The G2 stretch occupies residues 378-382; it reads GITQH. The interval 399 to 402 is G3; it reads DTPG. GTP-binding positions include 399-403 and 453-456; these read DTPGH and NKMD. The segment at 453-456 is G4; that stretch reads NKMD. Residues 489-491 are G5; that stretch reads SAH.

Belongs to the TRAFAC class translation factor GTPase superfamily. Classic translation factor GTPase family. IF-2 subfamily.

It is found in the cytoplasm. In terms of biological role, one of the essential components for the initiation of protein synthesis. Protects formylmethionyl-tRNA from spontaneous hydrolysis and promotes its binding to the 30S ribosomal subunits. Also involved in the hydrolysis of GTP during the formation of the 70S ribosomal complex. This Marinobacter nauticus (strain ATCC 700491 / DSM 11845 / VT8) (Marinobacter aquaeolei) protein is Translation initiation factor IF-2.